Here is a 138-residue protein sequence, read N- to C-terminus: Cysteine desulfuration protein SufE (138 aa).

The active-site Cysteine persulfide intermediate is the Cys51.

The protein belongs to the SufE family. Homodimer. Interacts with SufS.

It localises to the cytoplasm. It functions in the pathway cofactor biosynthesis; iron-sulfur cluster biosynthesis. Functionally, participates in cysteine desulfuration mediated by SufS. Cysteine desulfuration mobilizes sulfur from L-cysteine to yield L-alanine and constitutes an essential step in sulfur metabolism for biosynthesis of a variety of sulfur-containing biomolecules. Functions as a sulfur acceptor for SufS, by mediating the direct transfer of the sulfur atom from the S-sulfanylcysteine of SufS, an intermediate product of cysteine desulfuration process. The sequence is that of Cysteine desulfuration protein SufE from Cronobacter sakazakii (strain ATCC BAA-894) (Enterobacter sakazakii).